A 119-amino-acid polypeptide reads, in one-letter code: Large ribosomal subunit protein uL22c (119 aa).

It belongs to the universal ribosomal protein uL22 family. Part of the 50S ribosomal subunit.

The protein resides in the plastid. It is found in the chloroplast. Functionally, this protein binds specifically to 23S rRNA. The globular domain of the protein is located near the polypeptide exit tunnel on the outside of the subunit, while an extended beta-hairpin is found that lines the wall of the exit tunnel in the center of the 70S ribosome. The chain is Large ribosomal subunit protein uL22c (rpl22) from Anthoceros angustus (Hornwort).